Here is a 232-residue protein sequence, read N- to C-terminus: Putative N-acetylmannosamine-6-phosphate 2-epimerase (232 aa).

The protein belongs to the NanE family.

The enzyme catalyses an N-acyl-D-glucosamine 6-phosphate = an N-acyl-D-mannosamine 6-phosphate. The protein operates within amino-sugar metabolism; N-acetylneuraminate degradation; D-fructose 6-phosphate from N-acetylneuraminate: step 3/5. Functionally, converts N-acetylmannosamine-6-phosphate (ManNAc-6-P) to N-acetylglucosamine-6-phosphate (GlcNAc-6-P). This chain is Putative N-acetylmannosamine-6-phosphate 2-epimerase, found in Borreliella afzelii (strain PKo) (Borrelia afzelii).